The sequence spans 426 residues: Histidinol dehydrogenase (426 aa).

NAD(+) contacts are provided by Y123, Q185, and N208. Residues S231, Q253, and H256 each contribute to the substrate site. Zn(2+) contacts are provided by Q253 and H256. Residues E321 and H322 each act as proton acceptor in the active site. Substrate-binding residues include H322, D355, E409, and H414. Residue D355 participates in Zn(2+) binding. H414 is a Zn(2+) binding site.

It belongs to the histidinol dehydrogenase family. The cofactor is Zn(2+).

The enzyme catalyses L-histidinol + 2 NAD(+) + H2O = L-histidine + 2 NADH + 3 H(+). It functions in the pathway amino-acid biosynthesis; L-histidine biosynthesis; L-histidine from 5-phospho-alpha-D-ribose 1-diphosphate: step 9/9. In terms of biological role, catalyzes the sequential NAD-dependent oxidations of L-histidinol to L-histidinaldehyde and then to L-histidine. This is Histidinol dehydrogenase from Bacillus licheniformis (strain ATCC 14580 / DSM 13 / JCM 2505 / CCUG 7422 / NBRC 12200 / NCIMB 9375 / NCTC 10341 / NRRL NRS-1264 / Gibson 46).